The primary structure comprises 467 residues: A-type ATP synthase subunit B (467 aa).

Residues 95–114 (GKGQPRDHMPLPPPEDFRDV) form a disordered region.

The protein belongs to the ATPase alpha/beta chains family. In terms of assembly, has multiple subunits with at least A(3), B(3), C, D, E, F, H, I and proteolipid K(x).

The protein localises to the cell membrane. Its function is as follows. Component of the A-type ATP synthase that produces ATP from ADP in the presence of a proton gradient across the membrane. The B chain is a regulatory subunit. The sequence is that of A-type ATP synthase subunit B from Pyrobaculum islandicum (strain DSM 4184 / JCM 9189 / GEO3).